The following is a 432-amino-acid chain: UDP-glucose 6-dehydrogenase (432 aa).

NAD(+) is bound by residues 2-19 (NITFIGSGYVGLVSGIIM), valine 11, aspartate 30, lysine 35, threonine 121, and glutamate 152. Substrate contacts are provided by residues 148 to 152 (EFLRE), lysine 202, asparagine 206, 247 to 251 (FLNAG), and glycine 255. Cysteine 258 functions as the Nucleophile in the catalytic mechanism. An NAD(+)-binding site is contributed by lysine 261. Lysine 319 contacts substrate. Arginine 326 contacts NAD(+).

This sequence belongs to the UDP-glucose/GDP-mannose dehydrogenase family.

The enzyme catalyses UDP-alpha-D-glucose + 2 NAD(+) + H2O = UDP-alpha-D-glucuronate + 2 NADH + 3 H(+). It functions in the pathway nucleotide-sugar biosynthesis; UDP-alpha-D-glucuronate biosynthesis; UDP-alpha-D-glucuronate from UDP-alpha-D-glucose: step 1/1. This chain is UDP-glucose 6-dehydrogenase (udg), found in Rickettsia conorii (strain ATCC VR-613 / Malish 7).